A 712-amino-acid polypeptide reads, in one-letter code: Envelope glycoprotein gp160 (712 aa).

Positions 1-24 (MCGRNQLFVASLLASACLIYCVQY) are cleaved as a signal peptide. At 25–673 (VTVFYGVPVW…LTSWIKYIQY (649 aa)) the chain is on the extracellular side. N-linked (GlcNAc...) asparagine; by host glycosylation occurs at asparagine 36. Cysteine 43 and cysteine 56 form a disulfide bridge. 25 N-linked (GlcNAc...) asparagine; by host glycosylation sites follow: asparagine 69, asparagine 78, asparagine 113, asparagine 119, asparagine 131, asparagine 137, asparagine 145, asparagine 160, asparagine 173, asparagine 200, asparagine 232, asparagine 235, asparagine 242, asparagine 266, asparagine 272, asparagine 283, asparagine 294, asparagine 304, asparagine 359, asparagine 392, asparagine 402, asparagine 405, asparagine 442, asparagine 457, and asparagine 460. 5 cysteine pairs are disulfide-bonded: cysteine 100-cysteine 208, cysteine 107-cysteine 199, cysteine 112-cysteine 157, cysteine 221-cysteine 251, and cysteine 231-cysteine 243. Residues 112-156 (CNSTTAKNTTSTPTTTTTANTTIGENSSCIRTDNCTGLGEEEMVD) are V1. The interval 157-199 (CQFNMTGLERDKKKLYNETWYSKDVVCESKDTKKEKTCYMNHC) is V2. The interval 299–331 (CKRPGNKTVVPITLMSGLVFHSQPINRRPRQAW) is V3. Cysteines 299 and 332 form a disulfide. 2 cysteine pairs are disulfide-bonded: cysteine 384–cysteine 441 and cysteine 391–cysteine 414. Residues 391 to 414 (CNMTWFLNWVENRTNQTQHNYVPC) form a V4 region. A V5 region spans residues 457-463 (NQTNITF). A fusion peptide region spans residues 506–526 (GVFVLGFLGFLTTAGAAMGAA). The tract at residues 569 to 585 (LQARVTAIEKYLKDQAQ) is immunosuppression. Residues asparagine 605, asparagine 614, and asparagine 630 are each glycosylated (N-linked (GlcNAc...) asparagine; by host). The stretch at 614 to 646 (NITWQEWEQRIRNLEANISESLEQAQIQQEKNM) forms a coiled coil. The interval 651 to 672 (KLNSWDVFSNWFDLTSWIKYIQ) is MPER; binding to GalCer. The helical transmembrane segment at 674-694 (GVYIVVGIIVLRMVIYVVQML) threads the bilayer. Topologically, residues 695–712 (SRLRKGYRPVFSSPPAYS) are cytoplasmic. The short motif at 701-704 (YRPV) is the YXXV motif; contains endocytosis signal element.

In terms of assembly, the mature envelope protein (Env) consists of a homotrimer of non-covalently associated gp120-gp41 heterodimers. The resulting complex protrudes from the virus surface as a spike. There seems to be as few as 10 spikes on the average virion. Interacts with human CD4, CCR5 and CXCR4, to form a P4HB/PDI-CD4-CXCR4-gp120 complex. Gp120 also interacts with the C-type lectins CD209/DC-SIGN and CLEC4M/DC-SIGNR (collectively referred to as DC-SIGN(R)). Gp120 and gp41 interact with GalCer. The mature envelope protein (Env) consists of a homotrimer of non-covalently associated gp120-gp41 heterodimers. The resulting complex protrudes from the virus surface as a spike. There seems to be as few as 10 spikes on the average virion. In terms of processing, specific enzymatic cleavages in vivo yield mature proteins. Envelope glycoproteins are synthesized as an inactive precursor that is heavily N-glycosylated and processed likely by host cell furin in the Golgi to yield the mature SU and TM proteins. The cleavage site between SU and TM requires the minimal sequence [KR]-X-[KR]-R.

It localises to the virion membrane. Its subcellular location is the host cell membrane. The protein resides in the host endosome membrane. In terms of biological role, the surface protein gp120 (SU) attaches the virus to the host lymphoid cell by binding to the primary receptor CD4. This interaction induces a structural rearrangement creating a high affinity binding site for a chemokine coreceptor like CXCR4 and/or CCR5. This peculiar 2 stage receptor-interaction strategy allows gp120 to maintain the highly conserved coreceptor-binding site in a cryptic conformation, protected from neutralizing antibodies. Since CD4 also displays a binding site for the disulfide-isomerase P4HB/PDI, a P4HB/PDI-CD4-CXCR4-gp120 complex may form. In that complex, P4HB/PDI could reach and reduce gp120 disulfide bonds, causing major conformational changes in gp120. TXN, another PDI family member could also be involved in disulfide rearrangements in Env during fusion. These changes are transmitted to the transmembrane protein gp41 and are thought to activate its fusogenic potential by unmasking its fusion peptide. Functionally, the surface protein gp120 is a ligand for CD209/DC-SIGN and CLEC4M/DC-SIGNR, which are respectively found on dendritic cells (DCs), and on endothelial cells of liver sinusoids and lymph node sinuses. These interactions allow capture of viral particles at mucosal surfaces by these cells and subsequent transmission to permissive cells. DCs are professional antigen presenting cells, critical for host immunity by inducing specific immune responses against a broad variety of pathogens. They act as sentinels in various tissues where they take up antigen, process it, and present it to T-cells following migration to lymphoid organs. HIV subverts the migration properties of dendritic cells to gain access to CD4+ T-cells in lymph nodes. Virus transmission to permissive T-cells occurs either in trans (without DCs infection, through viral capture and transmission), or in cis (following DCs productive infection, through the usual CD4-gp120 interaction), thereby inducing a robust infection. In trans infection, bound virions remain infectious over days and it is proposed that they are not degraded, but protected in non-lysosomal acidic organelles within the DCs close to the cell membrane thus contributing to the viral infectious potential during DCs' migration from the periphery to the lymphoid tissues. On arrival at lymphoid tissues, intact virions recycle back to DCs' cell surface allowing virus transmission to CD4+ T-cells. Virion capture also seems to lead to MHC-II-restricted viral antigen presentation, and probably to the activation of HIV-specific CD4+ cells. Its function is as follows. The transmembrane protein gp41 (TM) acts as a class I viral fusion protein. Under the current model, the protein has at least 3 conformational states: pre-fusion native state, pre-hairpin intermediate state, and post-fusion hairpin state. During fusion of viral and target intracellular membranes, the coiled coil regions (heptad repeats) assume a trimer-of-hairpins structure, positioning the fusion peptide in close proximity to the C-terminal region of the ectodomain. The formation of this structure appears to drive apposition and subsequent fusion of viral and target cell membranes. Complete fusion occurs in host cell endosomes and is dynamin-dependent, however some lipid transfer might occur at the plasma membrane. The virus undergoes clathrin-dependent internalization long before endosomal fusion, thus minimizing the surface exposure of conserved viral epitopes during fusion and reducing the efficacy of inhibitors targeting these epitopes. Membranes fusion leads to delivery of the nucleocapsid into the cytoplasm. The envelope glycoprotein gp160 precursor down-modulates cell surface CD4 antigen by interacting with it in the endoplasmic reticulum and blocking its transport to the cell surface. In terms of biological role, the gp120-gp41 heterodimer seems to contribute to T-cell depletion during HIV-1 infection. The envelope glycoproteins expressed on the surface of infected cells induce apoptosis through an interaction with uninfected cells expressing the receptor (CD4) and the coreceptors CXCR4 or CCR5. This type of bystander killing may be obtained by at least three distinct mechanisms. First, the interaction between the 2 cells can induce cellular fusion followed by nuclear fusion within the syncytium. Syncytia are condemned to die from apoptosis. Second, the 2 interacting cells may not fuse entirely and simply exchange plasma membrane lipids, after a sort of hemifusion process, followed by rapid death. Third, it is possible that virus-infected cells, on the point of undergoing apoptosis, fuse with CD4-expressing cells, in which case apoptosis is rapidly transmitted from one cell to the other and thus occurs in a sort of contagious fashion. Functionally, the gp120-gp41 heterodimer allows rapid transcytosis of the virus through CD4 negative cells such as simple epithelial monolayers of the intestinal, rectal and endocervical epithelial barriers. Both gp120 and gp41 specifically recognize glycosphingolipids galactosyl-ceramide (GalCer) or 3' sulfo-galactosyl-ceramide (GalS) present in the lipid rafts structures of epithelial cells. Binding to these alternative receptors allows the rapid transcytosis of the virus through the epithelial cells. This transcytotic vesicle-mediated transport of virions from the apical side to the basolateral side of the epithelial cells does not involve infection of the cells themselves. The sequence is that of Envelope glycoprotein gp160 (env) from Homo sapiens (Human).